A 338-amino-acid chain; its full sequence is 3-phosphoshikimate 1-carboxyvinyltransferase 2 (338 aa).

Position 25 (R25) interacts with phosphoenolpyruvate. S72, S73, Q74, S100, D225, and K252 together coordinate 3-phosphoshikimate. Q74 lines the phosphoenolpyruvate pocket. D225 serves as the catalytic Proton acceptor. Phosphoenolpyruvate contacts are provided by R256, R298, and K323.

It belongs to the EPSP synthase family.

It is found in the plastid. The protein localises to the chloroplast. The enzyme catalyses 3-phosphoshikimate + phosphoenolpyruvate = 5-O-(1-carboxyvinyl)-3-phosphoshikimate + phosphate. It participates in metabolic intermediate biosynthesis; chorismate biosynthesis; chorismate from D-erythrose 4-phosphate and phosphoenolpyruvate: step 6/7. In terms of biological role, catalyzes the transfer of the enolpyruvyl moiety of phosphoenolpyruvate (PEP) to the 5-hydroxyl of shikimate-3-phosphate (S3P) to produce enolpyruvyl shikimate-3-phosphate and inorganic phosphate. The sequence is that of 3-phosphoshikimate 1-carboxyvinyltransferase 2 (EPSPS-2) from Nicotiana tabacum (Common tobacco).